A 337-amino-acid chain; its full sequence is Biotin synthase (337 aa).

One can recognise a Radical SAM core domain in the interval 39 to 267 (QEVQVCTLLS…KAMVRLSAGR (229 aa)). 3 residues coordinate [4Fe-4S] cluster: C54, C58, and C61. C98, C130, C190, and R262 together coordinate [2Fe-2S] cluster.

This sequence belongs to the radical SAM superfamily. Biotin synthase family. Homodimer. [4Fe-4S] cluster is required as a cofactor. [2Fe-2S] cluster serves as cofactor.

It catalyses the reaction (4R,5S)-dethiobiotin + (sulfur carrier)-SH + 2 reduced [2Fe-2S]-[ferredoxin] + 2 S-adenosyl-L-methionine = (sulfur carrier)-H + biotin + 2 5'-deoxyadenosine + 2 L-methionine + 2 oxidized [2Fe-2S]-[ferredoxin]. It participates in cofactor biosynthesis; biotin biosynthesis; biotin from 7,8-diaminononanoate: step 2/2. Functionally, catalyzes the conversion of dethiobiotin (DTB) to biotin by the insertion of a sulfur atom into dethiobiotin via a radical-based mechanism. In Cytophaga hutchinsonii (strain ATCC 33406 / DSM 1761 / CIP 103989 / NBRC 15051 / NCIMB 9469 / D465), this protein is Biotin synthase.